The following is a 427-amino-acid chain: Glutamate-1-semialdehyde 2,1-aminomutase (427 aa).

Residue K267 is modified to N6-(pyridoxal phosphate)lysine.

Belongs to the class-III pyridoxal-phosphate-dependent aminotransferase family. HemL subfamily. In terms of assembly, homodimer. It depends on pyridoxal 5'-phosphate as a cofactor.

The protein localises to the cytoplasm. It carries out the reaction (S)-4-amino-5-oxopentanoate = 5-aminolevulinate. The protein operates within porphyrin-containing compound metabolism; protoporphyrin-IX biosynthesis; 5-aminolevulinate from L-glutamyl-tRNA(Glu): step 2/2. The chain is Glutamate-1-semialdehyde 2,1-aminomutase from Acetivibrio thermocellus (strain ATCC 27405 / DSM 1237 / JCM 9322 / NBRC 103400 / NCIMB 10682 / NRRL B-4536 / VPI 7372) (Clostridium thermocellum).